The following is a 118-amino-acid chain: Co-chaperonin GroES (118 aa).

The protein belongs to the GroES chaperonin family. In terms of assembly, heptamer of 7 subunits arranged in a ring. Interacts with the chaperonin GroEL.

The protein localises to the cytoplasm. Together with the chaperonin GroEL, plays an essential role in assisting protein folding. The GroEL-GroES system forms a nano-cage that allows encapsulation of the non-native substrate proteins and provides a physical environment optimized to promote and accelerate protein folding. GroES binds to the apical surface of the GroEL ring, thereby capping the opening of the GroEL channel. The protein is Co-chaperonin GroES of Helicobacter pylori (strain HPAG1).